Here is a 350-residue protein sequence, read N- to C-terminus: MPVLHNRISNDALKAKMLAESEPRITISFYKYFHIADPKATRDALYQLFTALDVFGRVYLAHEGINAQISVPASNVETFRAQLYAFDPALEGLRLNIALDDDGKSFWVLRMKVRDRIVSDGIDDPHFDASNVGEYLQAAEVNAMLDDPDALFIDMRNHYEYEVGHFENALEIPADTFREQLPKAVEMMQAHKDKKIVMYCTGGIRCEKASAWMKHNGFNKVWHIEGGIIEYARKAREQGLPVRFIGKNFVFDERMGERISDEIIAHCHQCGAPCDSHTNCKNDGCHLLFIQCPVCAEKYKGCCSEICCEESALPPEEQRRRRAGRENSNKIFNKSRGRLNTTLGIPDPTE.

One can recognise a Rhodanese domain in the interval 146 to 240 (DDPDALFIDM…YARKAREQGL (95 aa)). The Cysteine persulfide intermediate role is filled by Cys200.

This sequence belongs to the TrhO family.

The catalysed reaction is uridine(34) in tRNA + AH2 + O2 = 5-hydroxyuridine(34) in tRNA + A + H2O. In terms of biological role, catalyzes oxygen-dependent 5-hydroxyuridine (ho5U) modification at position 34 in tRNAs, the first step in 5-carboxymethoxyuridine (cmo5U) biosynthesis. May be part of an alternate pathway, which is able to bypass cmo5U biogenesis in a subset of tRNAs under aerobic conditions. In Escherichia coli O127:H6 (strain E2348/69 / EPEC), this protein is tRNA uridine(34) hydroxylase.